Here is a 159-residue protein sequence, read N- to C-terminus: Eukaryotic translation initiation factor 5A-1 (159 aa).

The segment covering 1–12 has biased composition (basic and acidic residues); sequence MSDEEHHFESKA. The disordered stretch occupies residues 1–23; that stretch reads MSDEEHHFESKADAGASKTYPQQ. Lys52 carries the hypusine modification.

It belongs to the eIF-5A family. In terms of processing, lys-52 undergoes hypusination, a unique post-translational modification that consists in the addition of a butylamino group from spermidine to lysine side chain, leading to the formation of the unusual amino acid hypusine. eIF-5As are the only known proteins to undergo this modification, which is essential for their function.

Its function is as follows. Translation factor that promotes translation elongation and termination, particularly upon ribosome stalling at specific amino acid sequence contexts. Binds between the exit (E) and peptidyl (P) site of the ribosome and promotes rescue of stalled ribosome: specifically required for efficient translation of polyproline-containing peptides as well as other motifs that stall the ribosome. Acts as a ribosome quality control (RQC) cofactor by joining the RQC complex to facilitate peptidyl transfer during CAT tailing step. This Solanum lycopersicum (Tomato) protein is Eukaryotic translation initiation factor 5A-1.